The following is a 441-amino-acid chain: Protein translocase subunit SecY (441 aa).

Helical transmembrane passes span 24 to 44 (LFVL…VPGI), 77 to 97 (ILAL…LLAT), 123 to 143 (ATVV…PNML), 152 to 172 (FSFY…LMWL), 181 to 201 (IGNG…PSAI), 215 to 235 (PLVL…VVFV), 272 to 292 (VMPA…TQWF), 313 to 333 (PLYL…YTAM), 373 to 393 (LIGG…TSAW), and 397 to 417 (FYFG…FIVQ).

This sequence belongs to the SecY/SEC61-alpha family. Component of the Sec protein translocase complex. Heterotrimer consisting of SecY, SecE and SecG subunits. The heterotrimers can form oligomers, although 1 heterotrimer is thought to be able to translocate proteins. Interacts with the ribosome. Interacts with SecDF, and other proteins may be involved. Interacts with SecA.

The protein resides in the cell inner membrane. Its function is as follows. The central subunit of the protein translocation channel SecYEG. Consists of two halves formed by TMs 1-5 and 6-10. These two domains form a lateral gate at the front which open onto the bilayer between TMs 2 and 7, and are clamped together by SecE at the back. The channel is closed by both a pore ring composed of hydrophobic SecY resides and a short helix (helix 2A) on the extracellular side of the membrane which forms a plug. The plug probably moves laterally to allow the channel to open. The ring and the pore may move independently. This is Protein translocase subunit SecY from Haemophilus influenzae (strain ATCC 51907 / DSM 11121 / KW20 / Rd).